Reading from the N-terminus, the 802-residue chain is Phenylalanine--tRNA ligase beta subunit (802 aa).

The region spanning 39-154 (AEGLSKLVVG…EDAVPGDSIF (116 aa)) is the tRNA-binding domain. One can recognise a B5 domain in the interval 407–482 (TEPVQVSTSL…RIYGYEKLPT (76 aa)). The Mg(2+) site is built by aspartate 460, aspartate 466, glutamate 469, and glutamate 470. The region spanning 709 to 802 (TKFPAVSRDI…LTEKVEAEVR (94 aa)) is the FDX-ACB domain.

The protein belongs to the phenylalanyl-tRNA synthetase beta subunit family. Type 1 subfamily. As to quaternary structure, tetramer of two alpha and two beta subunits. It depends on Mg(2+) as a cofactor.

The protein resides in the cytoplasm. It catalyses the reaction tRNA(Phe) + L-phenylalanine + ATP = L-phenylalanyl-tRNA(Phe) + AMP + diphosphate + H(+). The sequence is that of Phenylalanine--tRNA ligase beta subunit from Streptococcus thermophilus (strain CNRZ 1066).